The chain runs to 357 residues: uncharacterized protein (357 aa).

Transmembrane regions (helical) follow at residues 21-41, 86-106, and 135-155; these read FIKI…LFSW, FFCL…CTLF, and GGFV…PVIF. 2 disordered regions span residues 184-229 and 283-357; these read DKNK…AMSD and KAGS…NKRN. Low complexity predominate over residues 195 to 223; that stretch reads TTNTTNFSGNGSSSSTTNATSSSSSQANN. Composition is skewed to basic and acidic residues over residues 305–314 and 322–337; these read KIEEYDNQKQ and KETN…EKET. A coiled-coil region spans residues 305–337; the sequence is KIEEYDNQKQEEEENEEKETNKQQTQKDDEKET. The span at 346–357 shows a compositional bias: basic residues; it reads KKSKKGKKNKRN.

It localises to the membrane. This is an uncharacterized protein from Dictyostelium discoideum (Social amoeba).